The chain runs to 2240 residues: MDSEAYPMKSSVKISQKKKASQDMAVICVWVMPLAVFGLIAIGQAAKTGQVQASSGSCAFHTLDGVAAESEGVRFIRLREDAQVGKEILRLQAYPRSTAALKGADASGDHKYFNLTEHNATTLVVSLARSLERLVDRDVPRNLLKFRILCAGKQEKLEEGSYLSITVYIEDVNDNAPEFLNVPYVVDVDENTSIESIIFEGVQAFDRDKPNTPNSEVHFSMSTVPEQLSADGSPYFALKSPHRPLLILKRELDFDNGIRQFKLPIFAWDRGTPANQANTTITINVRDVDDLPPKFTEGVYRTRINEFYPMTGVPIRIPLYFAPPIMAFDQDSLNASLVYDIISGNERQLFRVNPHNGVMYLQKEIDLEEESLPGNTFVLQLEARQKDNPLKKALARIEVEVLDLNDNVPEFEADYYNISIVENLPTGFSVLQVNAVDRDQGENSEFLYNLVETKDAAGAFRIDSRTGWITVRDDRLLDREQRRSIQLNVEALERNPSYLDDKHLKKPGPSKVQVEITLLDTNDNTPKFEHGNLYEFKVPINAPTGYVIGQVVAHDPDEGPNGHLLYELQRPKGSGYIPFRLDNKNGTIYVGGPLRRGRIAVFVEATDQPTNPSERRFSLAVITIEVYATIDDQAIDFVGAPYEFWVGANTPLGTSVGQVRTTLIYEGGDEIMYDLLHTYSEGVPFAIEERSGIITVIRELSEFKRKVYQFEAVANYLFANSSQSLVMSRSSSPLTTIASPAELSDEGVLITNLTIHIVNKPEQKVPLRPVIEEINMNVIHFHVEENVVGGIIGQLLYKNGINLVNNELGTYREMPSEPTSRNITMGSRFRSRNRSRSSKSKRRLPRRLVGDANIKLRYIIANQQEVVNKISITEDGTLLTLTGLDREQQPSYELTVIVEYSTGLVSGAGIYQVNIKVDDVNDNAPKFNALTYVGLINENCVVGTELSMNHAILIQDADEGPNAEFRVQLQGDYSDEFSIEYVNGTSSENSTHHKMPSTTGAFNIFNLTDQWNDEFKYQELHTTFMQTNFKLSSGPYFRISYTGKRGLDREKQQLYNLKIIAADTGGLSGYAHLTVLVADVNDNAPMFERISVFKDSRLEIREYTTDMEIYFVESSSGMTAPQATAAMMLAPPPYHIPGSPRFNVDRERSVGAGLGVVARAKSRRRMVRALTTKCPLFAIYEDTPVGTKVLQLSASDEDFGKNALLHYELQGEQVERTPGMPMLRVHGVKYFAIDKLSGELSVNYPLSANIEIMLNLTVTDIDGLKDSTCLRFTVMDVNNHAPTFKKSWYSFDTPEGEYKDSVLGQLTAIDMDFGENANITYTLSDSHLPFTIKPASGVLKIGGQLDRELKDKYSFQVIATDNAPVMQRMSSSVDVEVNVLDINDNRPEFIGYDDQTKAVKFIPSVADRTLMLPVYKAYLDRSTQPGTFVRQLTAIDKDNVGNGNGLVLYSIRHQEMQAPLFQIDSRDGTISTISRINGYNDYEHLNVSVIASDVGSPALSATAIVIVNLQGQAVTDPPKSTPKPEPPANVTVFQHAYYEVKLTENNEAPIEVMRLNLSAGLNPENYRWSLWLEEGLDETDAHPPFEYDAKNMLLYALKPFDREHISRYQLRIRADRLSREARNYARVSYPVVDERIEGLSLNECRILVHIADENDNAPKFRGNGQPIVAVLPQSASFGYPVTRVEANDLDEGLNAEIRYRLLNEPARLFGIDELSGNIRLLGELSRTEHIYGFDVKATDRMGADDGRSGIVNVFVYIINEAKQVRLVVAGMPVEVERRIEGLMEALSDAIGKDVRVRLLEPYSGGLEPATNAYIYAVDPHTNSIMEMEQLQDALAGLQLDALQLQQQKLDGGKPMPRILELAEFGQLARPAHASASSFMGGLEFVTVVLLALISLGALIAACCYVCMRQKRRLWSQRDFSASDAGLTYTIAGIGSPRGQKQRRQRQQRHTQRCSKGSTGSQRPTSAFMPESVCSSAQTQSTATATEKLEQQLHHHHQQQAMATQQQHHQYLNEQQRQQKREYIDVPLPKSIAKAAAVTSGGDGAVGVGSTPFVLKYNACQPVNNLNNYETSLFSLHSTGQDSGVEFLSSRELYETSPDSFQHGGSKRGNNTEVLCPRHAKAHLELRQPNTDSSDTYEDSLKTDEPLVAHNCRSANCEHRQHQQHPSHHPHYQNTRFEKRSCVRHSFSGVKDDLMQQSPQISLRPRGHALRNSMNDLEQRLHNLEQSFRRPLEFSKSNSLF.

5 Cadherin domains span residues 70-179 (SEGV…APEF), 180-295 (LNVP…PPKF), 296-411 (TEGV…VPEF), 412-528 (EADY…TPKF), and 529-643 (EHGN…APYE). Residues N114, N119, N191, N278, N334, N417, N585, N720, N752, N822, N833, N983, N989, N1006, N1255, N1318, N1486, N1529, and N1556 are each glycosylated (N-linked (GlcNAc...) asparagine). Residues 814–844 (MPSEPTSRNITMGSRFRSRNRSRSSKSKRRL) form a disordered region. 5 Cadherin domains span residues 824–927 (TMGS…APKF), 928–1087 (NALT…APMF), 1171–1284 (TTKC…APTF), 1285–1389 (KKSW…RPEF), and 1411–1520 (MLPV…PPKS). The span at 829-844 (FRSRNRSRSSKSKRRL) shows a compositional bias: basic residues. 2 Cadherin domains span residues 1534-1660 (QHAY…APKF) and 1661-1774 (RGNG…MPVE). A helical transmembrane segment spans residues 1884-1904 (FVTVVLLALISLGALIAACCY). The Cytoplasmic portion of the chain corresponds to 1905–2240 (VCMRQKRRLW…LEFSKSNSLF (336 aa)). 2 disordered regions span residues 1930–1972 (IAGI…PESV) and 2121–2140 (AHLE…EDSL). A compositionally biased stretch (basic residues) spans 1939–1952 (QKQRRQRQQRHTQR). Residues 1953 to 1964 (CSKGSTGSQRPT) show a composition bias toward polar residues.

It localises to the cell membrane. In terms of biological role, cadherins are calcium-dependent cell adhesion proteins. They preferentially interact with themselves in a homophilic manner in connecting cells. The sequence is that of Cadherin-89D (Cad89D) from Drosophila melanogaster (Fruit fly).